The chain runs to 155 residues: 2-C-methyl-D-erythritol 2,4-cyclodiphosphate synthase (155 aa).

Positions 8 and 10 each coordinate a divalent metal cation. Residues 8 to 10 and 34 to 35 contribute to the 4-CDP-2-C-methyl-D-erythritol 2-phosphate site; these read DVH and HS. H42 provides a ligand contact to a divalent metal cation. Residues 56 to 58, 61 to 65, 100 to 106, 132 to 135, F139, and K142 each bind 4-CDP-2-C-methyl-D-erythritol 2-phosphate; these read DIG, FPDSD, AQKPKML, and TTEE.

Belongs to the IspF family. In terms of assembly, homotrimer. A divalent metal cation is required as a cofactor.

The enzyme catalyses 4-CDP-2-C-methyl-D-erythritol 2-phosphate = 2-C-methyl-D-erythritol 2,4-cyclic diphosphate + CMP. It participates in isoprenoid biosynthesis; isopentenyl diphosphate biosynthesis via DXP pathway; isopentenyl diphosphate from 1-deoxy-D-xylulose 5-phosphate: step 4/6. Its function is as follows. Involved in the biosynthesis of isopentenyl diphosphate (IPP) and dimethylallyl diphosphate (DMAPP), two major building blocks of isoprenoid compounds. Catalyzes the conversion of 4-diphosphocytidyl-2-C-methyl-D-erythritol 2-phosphate (CDP-ME2P) to 2-C-methyl-D-erythritol 2,4-cyclodiphosphate (ME-CPP) with a corresponding release of cytidine 5-monophosphate (CMP). This is 2-C-methyl-D-erythritol 2,4-cyclodiphosphate synthase from Clostridium botulinum (strain 657 / Type Ba4).